Reading from the N-terminus, the 120-residue chain is NAD(P)H-quinone oxidoreductase subunit 3, chloroplastic (120 aa).

The next 3 membrane-spanning stretches (helical) occupy residues 9–29 (IFWA…LISG), 64–84 (MFAL…PWAM), and 88–108 (VLGV…IVGL).

The protein belongs to the complex I subunit 3 family. As to quaternary structure, NDH is composed of at least 16 different subunits, 5 of which are encoded in the nucleus.

It is found in the plastid. It localises to the chloroplast thylakoid membrane. The catalysed reaction is a plastoquinone + NADH + (n+1) H(+)(in) = a plastoquinol + NAD(+) + n H(+)(out). It catalyses the reaction a plastoquinone + NADPH + (n+1) H(+)(in) = a plastoquinol + NADP(+) + n H(+)(out). In terms of biological role, NDH shuttles electrons from NAD(P)H:plastoquinone, via FMN and iron-sulfur (Fe-S) centers, to quinones in the photosynthetic chain and possibly in a chloroplast respiratory chain. The immediate electron acceptor for the enzyme in this species is believed to be plastoquinone. Couples the redox reaction to proton translocation, and thus conserves the redox energy in a proton gradient. The protein is NAD(P)H-quinone oxidoreductase subunit 3, chloroplastic of Ranunculus macranthus (Large buttercup).